A 144-amino-acid polypeptide reads, in one-letter code: 3-hydroxyacyl-[acyl-carrier-protein] dehydratase FabZ (144 aa).

Residue H48 is part of the active site.

It belongs to the thioester dehydratase family. FabZ subfamily.

Its subcellular location is the cytoplasm. It catalyses the reaction a (3R)-hydroxyacyl-[ACP] = a (2E)-enoyl-[ACP] + H2O. In terms of biological role, involved in unsaturated fatty acids biosynthesis. Catalyzes the dehydration of short chain beta-hydroxyacyl-ACPs and long chain saturated and unsaturated beta-hydroxyacyl-ACPs. The chain is 3-hydroxyacyl-[acyl-carrier-protein] dehydratase FabZ from Bacillus anthracis (strain A0248).